We begin with the raw amino-acid sequence, 284 residues long: Bifunctional protein FolD (284 aa).

Residues 166–168, S191, and I232 contribute to the NADP(+) site; that span reads GAS.

Belongs to the tetrahydrofolate dehydrogenase/cyclohydrolase family. As to quaternary structure, homodimer.

The catalysed reaction is (6R)-5,10-methylene-5,6,7,8-tetrahydrofolate + NADP(+) = (6R)-5,10-methenyltetrahydrofolate + NADPH. The enzyme catalyses (6R)-5,10-methenyltetrahydrofolate + H2O = (6R)-10-formyltetrahydrofolate + H(+). It participates in one-carbon metabolism; tetrahydrofolate interconversion. Catalyzes the oxidation of 5,10-methylenetetrahydrofolate to 5,10-methenyltetrahydrofolate and then the hydrolysis of 5,10-methenyltetrahydrofolate to 10-formyltetrahydrofolate. The polypeptide is Bifunctional protein FolD (Neisseria meningitidis serogroup A / serotype 4A (strain DSM 15465 / Z2491)).